Consider the following 101-residue polypeptide: MGVLGGPSPRLRLYVYDFKEPGGEAERRKLRELLESHGAFRLQYSTYALLAEPEVHARVLRRVVARVDFEEGDSLIVVPMCRRCLRVARWVDAEGVRGLRF.

D17 provides a ligand contact to Mg(2+).

Belongs to the CRISPR-associated endoribonuclease Cas2 protein family. In terms of assembly, homodimer, forms a heterotetramer with a Cas1 homodimer. The cofactor is Mg(2+).

CRISPR (clustered regularly interspaced short palindromic repeat), is an adaptive immune system that provides protection against mobile genetic elements (viruses, transposable elements and conjugative plasmids). CRISPR clusters contain sequences complementary to antecedent mobile elements and target invading nucleic acids. CRISPR clusters are transcribed and processed into CRISPR RNA (crRNA). Functions as a ssRNA-specific endoribonuclease. Involved in the integration of spacer DNA into the CRISPR cassette. This is CRISPR-associated endoribonuclease Cas2 from Methanopyrus kandleri (strain AV19 / DSM 6324 / JCM 9639 / NBRC 100938).